We begin with the raw amino-acid sequence, 594 residues long: Arginine--tRNA ligase (594 aa).

The 'HIGH' region motif lies at Ala-139–His-149.

It belongs to the class-I aminoacyl-tRNA synthetase family. Monomer.

It localises to the cytoplasm. The catalysed reaction is tRNA(Arg) + L-arginine + ATP = L-arginyl-tRNA(Arg) + AMP + diphosphate. This Burkholderia thailandensis (strain ATCC 700388 / DSM 13276 / CCUG 48851 / CIP 106301 / E264) protein is Arginine--tRNA ligase.